The following is a 657-amino-acid chain: Keratinocyte proline-rich protein (657 aa).

3 disordered regions span residues 285-320, 425-493, and 517-568; these read QGTY…SPPR, HPFP…PSPE, and QPVP…CGQP. Residues 292–302 show a composition bias toward low complexity; it reads TSQRRSQSTSR. The segment covering 434–444 has biased composition (basic and acidic residues); the sequence is QHLDRSPESSR. Serine 442 carries the phosphoserine modification. Composition is skewed to pro residues over residues 449–493, 517–530, and 539–561; these read VPAP…PSPE, QPVP…VPRP, and GPRP…PCSS.

Its subcellular location is the cytoplasm. This chain is Keratinocyte proline-rich protein, found in Mus musculus (Mouse).